The sequence spans 360 residues: Peptide chain release factor 1 (360 aa).

N5-methylglutamine is present on glutamine 235. A compositionally biased stretch (basic and acidic residues) spans 281–307 (ERQRADSERSADRRSQVGSGDRSERIR). The interval 281 to 311 (ERQRADSERSADRRSQVGSGDRSERIRTYNF) is disordered.

It belongs to the prokaryotic/mitochondrial release factor family. Methylated by PrmC. Methylation increases the termination efficiency of RF1.

It is found in the cytoplasm. In terms of biological role, peptide chain release factor 1 directs the termination of translation in response to the peptide chain termination codons UAG and UAA. The polypeptide is Peptide chain release factor 1 (Rhizobium meliloti (strain 1021) (Ensifer meliloti)).